Consider the following 405-residue polypeptide: Probable tRNA sulfurtransferase (405 aa).

Positions 60 to 165 constitute a THUMP domain; that stretch reads AEVDKRLKKV…QDAVYISNQL (106 aa). ATP is bound by residues 183–184, 208–209, arginine 265, glycine 287, and glutamine 296; these read ML and HF.

Belongs to the ThiI family.

Its subcellular location is the cytoplasm. The catalysed reaction is [ThiI sulfur-carrier protein]-S-sulfanyl-L-cysteine + a uridine in tRNA + 2 reduced [2Fe-2S]-[ferredoxin] + ATP + H(+) = [ThiI sulfur-carrier protein]-L-cysteine + a 4-thiouridine in tRNA + 2 oxidized [2Fe-2S]-[ferredoxin] + AMP + diphosphate. It carries out the reaction [ThiS sulfur-carrier protein]-C-terminal Gly-Gly-AMP + S-sulfanyl-L-cysteinyl-[cysteine desulfurase] + AH2 = [ThiS sulfur-carrier protein]-C-terminal-Gly-aminoethanethioate + L-cysteinyl-[cysteine desulfurase] + A + AMP + 2 H(+). Its pathway is cofactor biosynthesis; thiamine diphosphate biosynthesis. Its function is as follows. Catalyzes the ATP-dependent transfer of a sulfur to tRNA to produce 4-thiouridine in position 8 of tRNAs, which functions as a near-UV photosensor. Also catalyzes the transfer of sulfur to the sulfur carrier protein ThiS, forming ThiS-thiocarboxylate. This is a step in the synthesis of thiazole, in the thiamine biosynthesis pathway. The sulfur is donated as persulfide by IscS. This Lactobacillus helveticus (strain DPC 4571) protein is Probable tRNA sulfurtransferase.